Here is a 351-residue protein sequence, read N- to C-terminus: Protein Wnt-4 (351 aa).

Residues 1–22 form the signal peptide; that stretch reads MSPRSCLRSLRLLVFAVFSAAA. Cystine bridges form between Cys-78–Cys-89, Cys-128–Cys-136, Cys-138–Cys-155, Cys-206–Cys-220, Cys-208–Cys-215, Cys-280–Cys-311, Cys-296–Cys-306, Cys-310–Cys-350, Cys-326–Cys-341, Cys-328–Cys-338, and Cys-333–Cys-334. Asn-88 is a glycosylation site (N-linked (GlcNAc...) asparagine). Ser-212 carries O-palmitoleoyl serine; by PORCN lipidation. A glycan (N-linked (GlcNAc...) asparagine) is linked at Asn-297.

This sequence belongs to the Wnt family. As to quaternary structure, interacts with PORCN. Interacts with PKD1. In terms of processing, palmitoleoylation is required for efficient binding to frizzled receptors. Depalmitoleoylation leads to Wnt signaling pathway inhibition. In terms of tissue distribution, in adults in lung and brain.

The protein resides in the secreted. It is found in the extracellular space. The protein localises to the extracellular matrix. Ligand for members of the frizzled family of seven transmembrane receptors. Plays an important role in the embryonic development of the urogenital tract and the lung. Required for normal mesenchyme to epithelium transition during embryonic kidney development. Required for the formation of early epithelial renal vesicles during kidney development. Required for normal formation of the Mullerian duct in females, and normal levels of oocytes in the ovaries. Required for normal down-regulation of 3 beta-hydroxysteroid dehydrogenase in the ovary. Required for normal lung development and for normal patterning of trachael cartilage rings. This Mus musculus (Mouse) protein is Protein Wnt-4 (Wnt4).